Consider the following 269-residue polypeptide: Formamidopyrimidine-DNA glycosylase (269 aa).

Pro2 functions as the Schiff-base intermediate with DNA in the catalytic mechanism. Glu3 serves as the catalytic Proton donor. Lys57 (proton donor; for beta-elimination activity) is an active-site residue. DNA contacts are provided by His90, Arg109, and Lys150. Residues 235–269 (QVYGRAGEPCRACGTPIESAKHGQRSTFFCPRCQR) form an FPG-type zinc finger. Arg259 functions as the Proton donor; for delta-elimination activity in the catalytic mechanism.

Belongs to the FPG family. Monomer. The cofactor is Zn(2+).

It catalyses the reaction Hydrolysis of DNA containing ring-opened 7-methylguanine residues, releasing 2,6-diamino-4-hydroxy-5-(N-methyl)formamidopyrimidine.. The enzyme catalyses 2'-deoxyribonucleotide-(2'-deoxyribose 5'-phosphate)-2'-deoxyribonucleotide-DNA = a 3'-end 2'-deoxyribonucleotide-(2,3-dehydro-2,3-deoxyribose 5'-phosphate)-DNA + a 5'-end 5'-phospho-2'-deoxyribonucleoside-DNA + H(+). Functionally, involved in base excision repair of DNA damaged by oxidation or by mutagenic agents. Acts as a DNA glycosylase that recognizes and removes damaged bases. Has a preference for oxidized purines, such as 7,8-dihydro-8-oxoguanine (8-oxoG). Has AP (apurinic/apyrimidinic) lyase activity and introduces nicks in the DNA strand. Cleaves the DNA backbone by beta-delta elimination to generate a single-strand break at the site of the removed base with both 3'- and 5'-phosphates. This Serratia proteamaculans (strain 568) protein is Formamidopyrimidine-DNA glycosylase.